A 122-amino-acid chain; its full sequence is Large ribosomal subunit protein uL14c (122 aa).

Belongs to the universal ribosomal protein uL14 family. In terms of assembly, part of the 50S ribosomal subunit.

The protein localises to the plastid. It is found in the chloroplast. In terms of biological role, binds to 23S rRNA. The protein is Large ribosomal subunit protein uL14c of Acorus calamus (Sweet flag).